The primary structure comprises 141 residues: uncharacterized protein (141 aa).

The protein localises to the mitochondrion. This is an uncharacterized protein from Arabidopsis thaliana (Mouse-ear cress).